We begin with the raw amino-acid sequence, 264 residues long: Putative hydro-lyase Cgl2544/cg2803 (264 aa).

Belongs to the D-glutamate cyclase family.

The polypeptide is Putative hydro-lyase Cgl2544/cg2803 (Corynebacterium glutamicum (strain ATCC 13032 / DSM 20300 / JCM 1318 / BCRC 11384 / CCUG 27702 / LMG 3730 / NBRC 12168 / NCIMB 10025 / NRRL B-2784 / 534)).